Here is a 387-residue protein sequence, read N- to C-terminus: 3-ketoacyl-CoA thiolase (387 aa).

Residue cysteine 91 is the Acyl-thioester intermediate of the active site. Active-site proton acceptor residues include histidine 343 and cysteine 373.

Belongs to the thiolase-like superfamily. Thiolase family. As to quaternary structure, heterotetramer of two alpha chains (FadB) and two beta chains (FadA).

It localises to the cytoplasm. The enzyme catalyses an acyl-CoA + acetyl-CoA = a 3-oxoacyl-CoA + CoA. It participates in lipid metabolism; fatty acid beta-oxidation. Its function is as follows. Catalyzes the final step of fatty acid oxidation in which acetyl-CoA is released and the CoA ester of a fatty acid two carbons shorter is formed. The protein is 3-ketoacyl-CoA thiolase of Vibrio cholerae serotype O1 (strain ATCC 39541 / Classical Ogawa 395 / O395).